Here is a 108-residue protein sequence, read N- to C-terminus: Evasin P1127 (108 aa).

Residues 1–28 form the signal peptide; that stretch reads MEAKTFAFLEIAMFIALGIQTFVAVTDA. 3 disulfide bridges follow: Cys41–Cys63, Cys45–Cys65, and Cys56–Cys76. Asn44 carries an N-linked (GlcNAc...) asparagine glycan. Residue Asn89 is glycosylated (N-linked (GlcNAc...) asparagine).

It is found in the secreted. Its function is as follows. Salivary chemokine-binding protein which binds to host chemokines CXCL1, CXCL2, CXCL3, CXCL5 and CXCL8. The polypeptide is Evasin P1127 (Ixodes ricinus (Common tick)).